We begin with the raw amino-acid sequence, 479 residues long: Glutamate--tRNA ligase 2 (479 aa).

The 'HIGH' region motif lies at 10–20 (PSPTGSLHIGG). The short motif at 243 to 247 (KLSKR) is the 'KMSKS' region element. Lys-246 contacts ATP.

The protein belongs to the class-I aminoacyl-tRNA synthetase family. Glutamate--tRNA ligase type 1 subfamily. Monomer.

The protein resides in the cytoplasm. It carries out the reaction tRNA(Glu) + L-glutamate + ATP = L-glutamyl-tRNA(Glu) + AMP + diphosphate. Functionally, catalyzes the attachment of glutamate to tRNA(Glu) in a two-step reaction: glutamate is first activated by ATP to form Glu-AMP and then transferred to the acceptor end of tRNA(Glu). This is Glutamate--tRNA ligase 2 from Thermoanaerobacter pseudethanolicus (strain ATCC 33223 / 39E) (Clostridium thermohydrosulfuricum).